A 310-amino-acid polypeptide reads, in one-letter code: Methionyl-tRNA formyltransferase (310 aa).

A (6S)-5,6,7,8-tetrahydrofolate-binding site is contributed by 111–114; sequence SILP.

Belongs to the Fmt family.

It catalyses the reaction L-methionyl-tRNA(fMet) + (6R)-10-formyltetrahydrofolate = N-formyl-L-methionyl-tRNA(fMet) + (6S)-5,6,7,8-tetrahydrofolate + H(+). In terms of biological role, attaches a formyl group to the free amino group of methionyl-tRNA(fMet). The formyl group appears to play a dual role in the initiator identity of N-formylmethionyl-tRNA by promoting its recognition by IF2 and preventing the misappropriation of this tRNA by the elongation apparatus. This is Methionyl-tRNA formyltransferase from Methylobacterium nodulans (strain LMG 21967 / CNCM I-2342 / ORS 2060).